An 86-amino-acid chain; its full sequence is Protein Vpu (86 aa).

Topologically, residues 1–12 (MVDLLAKVDYRI) are extracellular. Residues 13–33 (VIVAFIVALIIAIVVWTIAYI) traverse the membrane as a helical segment. At 34-86 (EYRKLLRQRRIDRLIKRTRERAEDSGNESDGDTEELSTMVDMGNLRLLDVNDL) the chain is on the cytoplasmic side. The tract at residues 52–71 (RERAEDSGNESDGDTEELST) is disordered. Ser58 and Ser62 each carry phosphoserine; by host CK2. Positions 58 to 68 (SGNESDGDTEE) are enriched in acidic residues.

This sequence belongs to the HIV-1 VPU protein family. As to quaternary structure, homopentamer. Interacts with host CD4 and BRTC; these interactions induce proteasomal degradation of CD4. Interacts with host BST2; this interaction leads to the degradation of host BST2. Interacts with host FBXW11. Interacts with host AP1M1; this interaction plays a role in the mistrafficking and subsequent degradation of host BST2. Interacts with host RANBP2; this interaction allows Vpu to down-regulate host BLM sumoylation. In terms of processing, phosphorylated by host CK2. This phosphorylation is necessary for interaction with human BTRC and degradation of CD4.

The protein resides in the host membrane. Its activity is regulated as follows. Ion channel activity is inhibited by hexamethylene amiloride in vitro. In terms of biological role, enhances virion budding by targeting host CD4 and Tetherin/BST2 to proteasome degradation. Degradation of CD4 prevents any unwanted premature interactions between viral Env and its host receptor CD4 in the endoplasmic reticulum. Degradation of antiretroviral protein Tetherin/BST2 is important for virion budding, as BST2 tethers new viral particles to the host cell membrane. Mechanistically, Vpu bridges either CD4 or BST2 to BTRC, a substrate recognition subunit of the Skp1/Cullin/F-box protein E3 ubiquitin ligase, induces their ubiquitination and subsequent proteasomal degradation. The alteration of the E3 ligase specificity by Vpu seems to promote the degradation of host IKBKB, leading to NF-kappa-B down-regulation and subsequent apoptosis. Acts as a viroporin that forms an oligomeric ion channel in membranes. Modulates the host DNA repair mechanisms to promote degradation of nuclear viral cDNA in cells that are already productively infected in order to suppress immune sensing and proviral hyper-integration (superinfection). Manipulates PML-NBs and modulates SUMOylation of host BLM protein thereby enhancing its DNA-end processing activity toward viral unintegrated linear DNA. Also inhibits RAD52-mediated homologous repair of viral cDNA, preventing the generation of dead-end circular forms of single copies of the long terminal repeat and permitting sustained nucleolytic attack. This chain is Protein Vpu, found in Homo sapiens (Human).